The primary structure comprises 360 residues: Phospho-N-acetylmuramoyl-pentapeptide-transferase (360 aa).

10 helical membrane-spanning segments follow: residues 26 to 46 (AILSVLTALGLSLWMGPIMIK), 70 to 90 (GTPTMGGIMILAAISITILLW), 94 to 114 (SNPYVWAVLTVLLGYGAVGFV), 132 to 152 (WKYFWQSLIAFVVAFALYAYG), 168 to 188 (VMPQLGLMYIILTYFVIVGTS), 199 to 219 (GLAIMPTVLVAAGFAVIAWAT), 236 to 256 (ASELVVVCTAIVGAGLGFLWF), 263 to 283 (VFMGDVGSLALGGALGTIAVL), 288 to 308 (LVLVIMGGVFVMETLSVILQV), and 338 to 358 (VIVRFWIISMVLVLIGLATLK).

The protein belongs to the glycosyltransferase 4 family. MraY subfamily. Mg(2+) is required as a cofactor.

It localises to the cell inner membrane. It catalyses the reaction UDP-N-acetyl-alpha-D-muramoyl-L-alanyl-gamma-D-glutamyl-meso-2,6-diaminopimeloyl-D-alanyl-D-alanine + di-trans,octa-cis-undecaprenyl phosphate = di-trans,octa-cis-undecaprenyl diphospho-N-acetyl-alpha-D-muramoyl-L-alanyl-D-glutamyl-meso-2,6-diaminopimeloyl-D-alanyl-D-alanine + UMP. Its pathway is cell wall biogenesis; peptidoglycan biosynthesis. Catalyzes the initial step of the lipid cycle reactions in the biosynthesis of the cell wall peptidoglycan: transfers peptidoglycan precursor phospho-MurNAc-pentapeptide from UDP-MurNAc-pentapeptide onto the lipid carrier undecaprenyl phosphate, yielding undecaprenyl-pyrophosphoryl-MurNAc-pentapeptide, known as lipid I. The sequence is that of Phospho-N-acetylmuramoyl-pentapeptide-transferase from Vibrio parahaemolyticus serotype O3:K6 (strain RIMD 2210633).